The sequence spans 699 residues: Polyribonucleotide nucleotidyltransferase (699 aa).

Asp488 and Asp494 together coordinate Mg(2+). The KH domain occupies Pro555 to Ile614. Residues Gly624–Lys692 enclose the S1 motif domain.

It belongs to the polyribonucleotide nucleotidyltransferase family. As to quaternary structure, component of the RNA degradosome, which is a multiprotein complex involved in RNA processing and mRNA degradation. The cofactor is Mg(2+).

Its subcellular location is the cytoplasm. The enzyme catalyses RNA(n+1) + phosphate = RNA(n) + a ribonucleoside 5'-diphosphate. Its function is as follows. Involved in mRNA degradation. Catalyzes the phosphorolysis of single-stranded polyribonucleotides processively in the 3'- to 5'-direction. This chain is Polyribonucleotide nucleotidyltransferase, found in Blochmanniella pennsylvanica (strain BPEN).